The primary structure comprises 215 residues: Pyrrolidone-carboxylate peptidase (215 aa).

Catalysis depends on residues E80, C143, and H167.

Belongs to the peptidase C15 family. In terms of assembly, homotetramer.

The protein resides in the cytoplasm. The catalysed reaction is Release of an N-terminal pyroglutamyl group from a polypeptide, the second amino acid generally not being Pro.. Removes 5-oxoproline from various penultimate amino acid residues except L-proline. The chain is Pyrrolidone-carboxylate peptidase from Yersinia pestis bv. Antiqua (strain Antiqua).